The following is a 196-amino-acid chain: V-type proton ATPase subunit E (196 aa).

It belongs to the V-ATPase E subunit family.

In terms of biological role, produces ATP from ADP in the presence of a proton gradient across the membrane. The chain is V-type proton ATPase subunit E from Clostridium botulinum (strain Alaska E43 / Type E3).